We begin with the raw amino-acid sequence, 795 residues long: TBC1 domain family member 5 (795 aa).

The segment covering methionine 1–glutamine 13 has biased composition (basic and acidic residues). The disordered stretch occupies residues methionine 1–glutamate 49. Residues serine 25–glutamate 49 show a composition bias toward polar residues. Threonine 42 is subject to Phosphothreonine. 2 positions are modified to phosphoserine: serine 43 and serine 44. A required for interaction with retromer; involved in interaction with ATG8 family proteins region spans residues arginine 56–valine 64. The LIR 1 signature appears at lysine 57 to leucine 62. The Rab-GAP TBC domain maps to leucine 81–glycine 359. Position 460 is a phosphoserine (serine 460). A disordered region spans residues proline 475 to serine 564. Low complexity predominate over residues glycine 484–proline 496. Phosphoserine is present on residues serine 522, serine 539, serine 541, serine 544, serine 554, serine 570, serine 584, and serine 730. Positions methionine 523–valine 542 are enriched in polar residues. The span at serine 554–serine 564 shows a compositional bias: polar residues. The tract at residues histidine 674–isoleucine 795 is disordered. Polar residues predominate over residues alanine 727–serine 748. Residues proline 765–serine 776 show a composition bias toward low complexity. An LIR 2 motif is present at residues serine 785–isoleucine 789. Positions glycine 786–serine 791 are required for interaction with ATG8 family proteins. Serine 791 is modified (phosphoserine).

In terms of assembly, interacts with MAP1LC3A, MAP1LC3B, MAP1LC3C, GABARAP, GABARAPL1, GABARAPL2. Interacts with VPS29 and VPS35; indicative for an association with retromer CSC subcomplex. MAP1LC3A and VPS29 compete for binding to TBC1D5. Interacts with AP2M1; indicative for an association with the AP2 complex. Interacts with ULK1 and ATG13 (phosphorylated); indicative for an association with the activated ULK1-ATG13-FIP200 complex. Interacts with ATG9A; the interactions seems to be restricted to the AP2-clathrin-associated fraction of ATG9A.

Its subcellular location is the endosome membrane. It is found in the cytoplasmic vesicle. The protein localises to the autophagosome. Its function is as follows. May act as a GTPase-activating protein (GAP) for Rab family protein(s). May act as a GAP for RAB7A. Can displace RAB7A and retromer CSC subcomplex from the endosomal membrane to the cytosol; at least retromer displacement seems to require its catalytic activity. Required for retrograde transport of cargo proteins from endosomes to the trans-Golgi network (TGN); the function seems to require its catalytic activity. Involved in regulation of autophagy. May act as a molecular switch between endosomal and autophagosomal transport and is involved in reprogramming vesicle trafficking upon autophagy induction. Involved in the trafficking of ATG9A upon activation of autophagy. May regulate the recruitment of ATG9A-AP2-containing vesicles to autophagic membranes. This is TBC1 domain family member 5 (TBC1D5) from Homo sapiens (Human).